The sequence spans 113 residues: Transmembrane protein 256 (113 aa).

Residues 1–29 form the signal peptide; that stretch reads MAGVGAAFRRLGALSGAGALGLASYGAHG. The Extracellular segment spans residues 30–63; that stretch reads AQFPDAYGKELFDKANKHHFLHSLALLGVPSCRK. Lys43 is modified (N6-acetyllysine). A helical transmembrane segment spans residues 64–84; the sequence is PVWAGLLLASGTTLFCTSFYY. Residues 85-92 lie on the Cytoplasmic side of the membrane; the sequence is QALSGDTS. The chain crosses the membrane as a helical span at residues 93–113; the sequence is IQTLGPVGGSLLILGWLALAF.

Belongs to the TMEM256 family.

It is found in the membrane. The chain is Transmembrane protein 256 (Tmem256) from Mus musculus (Mouse).